The chain runs to 252 residues: Phosphoglycolate phosphatase (252 aa).

D13 (nucleophile) is an active-site residue. Mg(2+) contacts are provided by D13, D15, and D192.

Belongs to the HAD-like hydrolase superfamily. CbbY/CbbZ/Gph/YieH family. In terms of assembly, monomer. It depends on Mg(2+) as a cofactor. Chloride serves as cofactor.

The catalysed reaction is 2-phosphoglycolate + H2O = glycolate + phosphate. It functions in the pathway organic acid metabolism; glycolate biosynthesis; glycolate from 2-phosphoglycolate: step 1/1. Specifically catalyzes the dephosphorylation of 2-phosphoglycolate. Is involved in the dissimilation of the intracellular 2-phosphoglycolate formed during the DNA repair of 3'-phosphoglycolate ends, a major class of DNA lesions induced by oxidative stress. The polypeptide is Phosphoglycolate phosphatase (Salmonella typhi).